Reading from the N-terminus, the 1047-residue chain is MGNIESVDGQSEMKHHIMPLKVPMPDPTELEERFAIVLNSMNLPPDKARLLRQYDNEKKWDLICDQERFQVKNPPHTYIQKLRGYLDPKVTRKKFRRRVQESTKVLRELEISLRTNHIGWVREFLNDENRGLDILVEYLSFAQCAVMLDFEGLENGEDFSLDKAKSWSRSIEDLHQNGCNTLVRSARQSVLRYGSTSNSKTIKNSRLVSQKDDVHVCIMCLRAIMNYQYGFNLVMSHAHAVNEIALSLNNKNPRTKALVLELLAAVCLVRGGHEIILSAFDNFKEVCKEKHRFEKLMEYFRSEDGNIDFMVACMQFINIVVHSVEDMNFRVHLQYEFTKLGLDDFLEKSKHTESDKLSVQIQAYLDNVFDVGGLLEDAETKNVALEKVEELEEHLSHVTEKLLDVENETMTKVADLEKQLLHKDKELAVIKETYESASTQVHTLRRMIQEKDAAFQRHNNIEKQLLELEQQGTIRLRKQPDGDIAIETLGAGAVAGTPLTDLRSLTVGMSTIGGLGGTSAVPVEAVAPPPPPPPPPPPPPPAPPLPSEVESIPIPPPPPPPLPGPSPSVILSVGLSAIRIKKPIKTKFRLPVFNWTALKPNQINGTVFNEIDDDRVLEELDLEKFEELFKTKAQGPVVDLSCSKSKVSQKVINKVQLLDANRSKNLAITLRKANKTTEEICKAIQTFDLKALPVDFVECLMRFLPTEAESKLLRQYERERRPLDQLAEEDRFMLLFSKIERLTQRMSIITFVGNFNDNVNMLTPQLNAIIAASASVKSSPKLKKILEIILALGNYMNSSKRGSVYGFKLQSLDLLLDTKSTDRKMTLLHYIALVVKEKYPELANFYNELHFVDKAAAVSLENVLLDVKELGKGMDLVRRECSLHDHAVLKGFAQTSDTQLDKLAKDAKTAEEAFNNVVLYFGESPKTTPPSVFFPVFVRFIRAYKEAVEENEQRKKQEEAMREKLLAQEAKQHDPKVQAQKKRHQQQELIAELRRRQAKDHRPVYEGKDGTIEDIITVLKSVPFTARTAKRGSRFFCDANLFDESIC.

Glycine 2 carries the N-myristoyl glycine lipid modification. The region spanning 22–462 (VPMPDPTELE…AAFQRHNNIE (441 aa)) is the GBD/FH3 domain. Residues 520-561 (AVPVEAVAPPPPPPPPPPPPPPAPPLPSEVESIPIPPPPPPP) form a disordered region. Over residues 527–546 (APPPPPPPPPPPPPPAPPLP) the composition is skewed to pro residues. An FH2 domain is found at 580 to 970 (IKKPIKTKFR…MREKLLAQEA (391 aa)). Residues 1000 to 1037 (DHRPVYEGKDGTIEDIITVLKSVPFTARTAKRGSRFFC) form the DAD domain.

It belongs to the formin homology family.

It localises to the cytoplasm. The protein resides in the cell membrane. Required for developmental angiogenesis, but not for vasculogenesis. This is Formin-like protein 3 (fmnl3) from Danio rerio (Zebrafish).